An 881-amino-acid chain; its full sequence is Alanine--tRNA ligase (881 aa).

Residues His565, His569, Cys672, and His676 each contribute to the Zn(2+) site.

The protein belongs to the class-II aminoacyl-tRNA synthetase family. It depends on Zn(2+) as a cofactor.

It is found in the cytoplasm. The enzyme catalyses tRNA(Ala) + L-alanine + ATP = L-alanyl-tRNA(Ala) + AMP + diphosphate. Catalyzes the attachment of alanine to tRNA(Ala) in a two-step reaction: alanine is first activated by ATP to form Ala-AMP and then transferred to the acceptor end of tRNA(Ala). Also edits incorrectly charged Ser-tRNA(Ala) and Gly-tRNA(Ala) via its editing domain. This Novosphingobium aromaticivorans (strain ATCC 700278 / DSM 12444 / CCUG 56034 / CIP 105152 / NBRC 16084 / F199) protein is Alanine--tRNA ligase.